A 220-amino-acid chain; its full sequence is Meiotic nuclear division protein 1 homolog (220 aa).

Residues 76-147 (SKALHARKRR…KVEIEKYQEC (72 aa)) adopt a coiled-coil conformation.

This sequence belongs to the MND1 family.

The protein localises to the nucleus. Required for proper homologous chromosome pairing and efficient cross-over and intragenic recombination during meiosis. Stimulates both DMC1- and RAD51-mediated homologous strand assimilation, which is required for the resolution of meiotic double-strand breaks. The chain is Meiotic nuclear division protein 1 homolog from Danio rerio (Zebrafish).